The primary structure comprises 374 residues: Tetraacyldisaccharide 4'-kinase (374 aa).

Threonine 43–threonine 50 is a binding site for ATP.

Belongs to the LpxK family.

It carries out the reaction a lipid A disaccharide + ATP = a lipid IVA + ADP + H(+). Its pathway is glycolipid biosynthesis; lipid IV(A) biosynthesis; lipid IV(A) from (3R)-3-hydroxytetradecanoyl-[acyl-carrier-protein] and UDP-N-acetyl-alpha-D-glucosamine: step 6/6. Its function is as follows. Transfers the gamma-phosphate of ATP to the 4'-position of a tetraacyldisaccharide 1-phosphate intermediate (termed DS-1-P) to form tetraacyldisaccharide 1,4'-bis-phosphate (lipid IVA). This Leptospira biflexa serovar Patoc (strain Patoc 1 / Ames) protein is Tetraacyldisaccharide 4'-kinase.